The following is a 144-amino-acid chain: Large ribosomal subunit protein uL11 (144 aa).

It belongs to the universal ribosomal protein uL11 family. As to quaternary structure, part of the ribosomal stalk of the 50S ribosomal subunit. Interacts with L10 and the large rRNA to form the base of the stalk. L10 forms an elongated spine to which L12 dimers bind in a sequential fashion forming a multimeric L10(L12)X complex. Post-translationally, one or more lysine residues are methylated.

Its function is as follows. Forms part of the ribosomal stalk which helps the ribosome interact with GTP-bound translation factors. This chain is Large ribosomal subunit protein uL11, found in Saccharopolyspora erythraea (strain ATCC 11635 / DSM 40517 / JCM 4748 / NBRC 13426 / NCIMB 8594 / NRRL 2338).